A 2097-amino-acid polypeptide reads, in one-letter code: SCAR-like protein 1 (2097 aa).

Disordered stretches follow at residues 205 to 227 (IANS…PRTT), 544 to 565 (AHSS…SIES), 1443 to 1467 (SQIA…PLSS), 1588 to 1616 (STEE…DPQK), 1730 to 1802 (QERV…EKTV), 1820 to 1842 (ASSH…PVTS), and 1893 to 1944 (YEGP…EGGY). Low complexity predominate over residues 549–562 (KQSSQKSSGLDGSS). Positions 1443–1454 (SQIASCSPTPSN) are enriched in polar residues. Positions 1766 to 1794 (SISQQGLQGSVFPSDTSDNGEHSSYTSRA) are enriched in polar residues. Basic and acidic residues predominate over residues 1908–1922 (YPHDDHNSEKEDIHQ). The WH2 domain occupies 2028–2046 (ERNLLLEQIRNKTFNLKPV).

It belongs to the SCAR/WAVE family.

It is found in the cytoplasm. It localises to the cytoskeleton. Functionally, involved in regulation of actin and microtubule organization. Part of a WAVE complex that activates the Arp2/3 complex. This Oryza sativa subsp. japonica (Rice) protein is SCAR-like protein 1.